Reading from the N-terminus, the 256-residue chain is N-glycosylase/DNA lyase (256 aa).

3 residues coordinate 8-oxoguanine: Q31, S58, and W69. Residues 125–184 (TLRQLSHIVGARREQKTLVFTIKILNYAYMCSRGVNRVLPFDIPIPVDYRVARLTWCAGL) form a helix-hairpin-helix region. K140 serves as the catalytic Schiff-base intermediate with DNA. 2 residues coordinate 8-oxoguanine: F144 and P170. D172 is an active-site residue. 8-oxoguanine is bound by residues D218 and W222.

It belongs to the archaeal N-glycosylase/DNA lyase (AGOG) family.

The enzyme catalyses 2'-deoxyribonucleotide-(2'-deoxyribose 5'-phosphate)-2'-deoxyribonucleotide-DNA = a 3'-end 2'-deoxyribonucleotide-(2,3-dehydro-2,3-deoxyribose 5'-phosphate)-DNA + a 5'-end 5'-phospho-2'-deoxyribonucleoside-DNA + H(+). In terms of biological role, DNA repair enzyme that is part of the base excision repair (BER) pathway; protects from oxidative damage by removing the major product of DNA oxidation, 8-oxoguanine (GO), from single- and double-stranded DNA substrates. This Pyrobaculum aerophilum (strain ATCC 51768 / DSM 7523 / JCM 9630 / CIP 104966 / NBRC 100827 / IM2) protein is N-glycosylase/DNA lyase.